A 468-amino-acid chain; its full sequence is Phosphatidylinositol-binding clathrin assembly protein LAP (468 aa).

Positions 16 to 158 constitute an ENTH domain; the sequence is RHSLAGQGLA…LSYRAMAFDF (143 aa). Residues 438-468 form a disordered region; the sequence is NAGDGTAKYDGGAGSSPFDWGATDDDGGAAQ. Over residues 459–468 the composition is skewed to acidic residues; it reads ATDDDGGAAQ.

This sequence belongs to the PICALM/SNAP91 family. As to quaternary structure, binds clathrin and phosphatidylinositol 4,5-bisphosphate. In embryos, expression is seen in central and peripheral nervous systems (brain and ventral nerve cord) and Garland cells. Coexpressed with clathrin at presynaptic boutons of neuromuscular junctions.

It is found in the membrane. The protein localises to the clathrin-coated pit. Its subcellular location is the golgi apparatus. The protein resides in the cytoplasmic vesicle. It localises to the clathrin-coated vesicle. Its function is as follows. Assembly protein recruiting clathrin and adaptor protein complex 2 (AP2) to cell membranes at sites of coated-pit formation and clathrin-vesicle assembly. May be required to determine the amount of membrane to be recycled, possibly by regulating the size of the clathrin cage. Involved in AP2-dependent clathrin-mediated endocytosis at the neuromuscular junction. The sequence is that of Phosphatidylinositol-binding clathrin assembly protein LAP (lap) from Drosophila melanogaster (Fruit fly).